We begin with the raw amino-acid sequence, 276 residues long: NADPH-dependent 7-cyano-7-deazaguanine reductase (276 aa).

Position 83-85 (83-85 (IES)) interacts with substrate. 85–86 (SK) serves as a coordination point for NADPH. Catalysis depends on cysteine 184, which acts as the Thioimide intermediate. Catalysis depends on aspartate 191, which acts as the Proton donor. 223-224 (HE) provides a ligand contact to substrate. 252 to 253 (RG) is a binding site for NADPH.

It belongs to the GTP cyclohydrolase I family. QueF type 2 subfamily. In terms of assembly, homodimer.

It is found in the cytoplasm. The catalysed reaction is 7-aminomethyl-7-carbaguanine + 2 NADP(+) = 7-cyano-7-deazaguanine + 2 NADPH + 3 H(+). It functions in the pathway tRNA modification; tRNA-queuosine biosynthesis. In terms of biological role, catalyzes the NADPH-dependent reduction of 7-cyano-7-deazaguanine (preQ0) to 7-aminomethyl-7-deazaguanine (preQ1). This chain is NADPH-dependent 7-cyano-7-deazaguanine reductase, found in Pseudomonas putida (strain ATCC 47054 / DSM 6125 / CFBP 8728 / NCIMB 11950 / KT2440).